A 140-amino-acid polypeptide reads, in one-letter code: Putative pre-16S rRNA nuclease (140 aa).

The protein belongs to the YqgF nuclease family.

Its subcellular location is the cytoplasm. In terms of biological role, could be a nuclease involved in processing of the 5'-end of pre-16S rRNA. The sequence is that of Putative pre-16S rRNA nuclease from Aeromonas hydrophila subsp. hydrophila (strain ATCC 7966 / DSM 30187 / BCRC 13018 / CCUG 14551 / JCM 1027 / KCTC 2358 / NCIMB 9240 / NCTC 8049).